The sequence spans 595 residues: Elongation factor 4 (595 aa).

The tr-type G domain occupies 2–184 (SHIRNFSIIA…RLVATIPPPT (183 aa)). Residues 14 to 19 (DHGKST) and 131 to 134 (NKMD) each bind GTP.

The protein belongs to the TRAFAC class translation factor GTPase superfamily. Classic translation factor GTPase family. LepA subfamily.

It is found in the cell inner membrane. The enzyme catalyses GTP + H2O = GDP + phosphate + H(+). Functionally, required for accurate and efficient protein synthesis under certain stress conditions. May act as a fidelity factor of the translation reaction, by catalyzing a one-codon backward translocation of tRNAs on improperly translocated ribosomes. Back-translocation proceeds from a post-translocation (POST) complex to a pre-translocation (PRE) complex, thus giving elongation factor G a second chance to translocate the tRNAs correctly. Binds to ribosomes in a GTP-dependent manner. This chain is Elongation factor 4, found in Pseudomonas syringae pv. tomato (strain ATCC BAA-871 / DC3000).